A 244-amino-acid polypeptide reads, in one-letter code: NAD(P)H-quinone oxidoreductase subunit K (244 aa).

[4Fe-4S] cluster is bound by residues Cys51, Cys52, Cys116, and Cys147.

This sequence belongs to the complex I 20 kDa subunit family. As to quaternary structure, NDH-1 can be composed of about 15 different subunits; different subcomplexes with different compositions have been identified which probably have different functions. It depends on [4Fe-4S] cluster as a cofactor.

It is found in the cellular thylakoid membrane. It carries out the reaction a plastoquinone + NADH + (n+1) H(+)(in) = a plastoquinol + NAD(+) + n H(+)(out). The enzyme catalyses a plastoquinone + NADPH + (n+1) H(+)(in) = a plastoquinol + NADP(+) + n H(+)(out). Functionally, NDH-1 shuttles electrons from an unknown electron donor, via FMN and iron-sulfur (Fe-S) centers, to quinones in the respiratory and/or the photosynthetic chain. The immediate electron acceptor for the enzyme in this species is believed to be plastoquinone. Couples the redox reaction to proton translocation, and thus conserves the redox energy in a proton gradient. Cyanobacterial NDH-1 also plays a role in inorganic carbon-concentration. The chain is NAD(P)H-quinone oxidoreductase subunit K from Synechococcus sp. (strain JA-2-3B'a(2-13)) (Cyanobacteria bacterium Yellowstone B-Prime).